The following is a 583-amino-acid chain: Threonine--tRNA ligase (583 aa).

A catalytic region spans residues 185 to 478; the sequence is DHRKLGRELN…LVEHYGGAFP (294 aa). Residues C278, H329, and H455 each contribute to the Zn(2+) site.

This sequence belongs to the class-II aminoacyl-tRNA synthetase family. In terms of assembly, homodimer. It depends on Zn(2+) as a cofactor.

The protein resides in the cytoplasm. The enzyme catalyses tRNA(Thr) + L-threonine + ATP = L-threonyl-tRNA(Thr) + AMP + diphosphate + H(+). Its function is as follows. Catalyzes the attachment of threonine to tRNA(Thr) in a two-step reaction: L-threonine is first activated by ATP to form Thr-AMP and then transferred to the acceptor end of tRNA(Thr). Also edits incorrectly charged L-seryl-tRNA(Thr). This Borrelia recurrentis (strain A1) protein is Threonine--tRNA ligase.